Reading from the N-terminus, the 197-residue chain is Fucoxanthin-chlorophyll a-c binding protein C, chloroplastic (197 aa).

The N-terminal 31 residues, 1-31 (MKTAVIASLIAGAAAFAPAKNAARTSVATNM), are a transit peptide targeting the chloroplast. Helical transmembrane passes span 73–94 (ISML…PGTI), 113–133 (IPAG…SSVM), and 174–196 (GRAA…SLLP).

This sequence belongs to the fucoxanthin chlorophyll protein family. In terms of assembly, the LHC complex of chromophytic algae is composed of fucoxanthin, chlorophyll A and C bound non-covalently by fucoxanthin chlorophyll proteins (FCPs). The ratio of the pigments in LHC; fucoxanthin: chlorophyll C: chlorophyll A; (0.6-1): (0.1-0.3): (1).

Its subcellular location is the plastid. It is found in the chloroplast thylakoid membrane. The light-harvesting complex (LHC) functions as a light receptor, it captures and delivers excitation energy to photosystems with which it is closely associated. Energy is transferred from the carotenoid and chlorophyll C (or B) to chlorophyll A and the photosynthetic reaction centers where it is used to synthesize ATP and reducing power. The chain is Fucoxanthin-chlorophyll a-c binding protein C, chloroplastic (FCPC) from Phaeodactylum tricornutum (Diatom).